We begin with the raw amino-acid sequence, 318 residues long: Holliday junction branch migration complex subunit RuvB (318 aa).

The tract at residues 1–168 is large ATPase domain (RuvB-L); sequence MPENLEIRPS…FGYVAKIVDY (168 aa). Residues I7, R8, G49, K52, T53, T54, R158, Y168, and R205 each coordinate ATP. Mg(2+) is bound at residue T53. The interval 169-239 is small ATPAse domain (RuvB-S); it reads TLEDMIQIIR…IVNKTFDSIG (71 aa). A head domain (RuvB-H) region spans residues 242 to 318; the sequence is NQGLSQINIE…RDYLLELKTN (77 aa). DNA-binding residues include R278, K297, and R302.

This sequence belongs to the RuvB family. As to quaternary structure, homohexamer. Forms an RuvA(8)-RuvB(12)-Holliday junction (HJ) complex. HJ DNA is sandwiched between 2 RuvA tetramers; dsDNA enters through RuvA and exits via RuvB. An RuvB hexamer assembles on each DNA strand where it exits the tetramer. Each RuvB hexamer is contacted by two RuvA subunits (via domain III) on 2 adjacent RuvB subunits; this complex drives branch migration. In the full resolvosome a probable DNA-RuvA(4)-RuvB(12)-RuvC(2) complex forms which resolves the HJ.

Its subcellular location is the cytoplasm. It catalyses the reaction ATP + H2O = ADP + phosphate + H(+). Its function is as follows. The RuvA-RuvB-RuvC complex processes Holliday junction (HJ) DNA during genetic recombination and DNA repair, while the RuvA-RuvB complex plays an important role in the rescue of blocked DNA replication forks via replication fork reversal (RFR). RuvA specifically binds to HJ cruciform DNA, conferring on it an open structure. The RuvB hexamer acts as an ATP-dependent pump, pulling dsDNA into and through the RuvAB complex. RuvB forms 2 homohexamers on either side of HJ DNA bound by 1 or 2 RuvA tetramers; 4 subunits per hexamer contact DNA at a time. Coordinated motions by a converter formed by DNA-disengaged RuvB subunits stimulates ATP hydrolysis and nucleotide exchange. Immobilization of the converter enables RuvB to convert the ATP-contained energy into a lever motion, pulling 2 nucleotides of DNA out of the RuvA tetramer per ATP hydrolyzed, thus driving DNA branch migration. The RuvB motors rotate together with the DNA substrate, which together with the progressing nucleotide cycle form the mechanistic basis for DNA recombination by continuous HJ branch migration. Branch migration allows RuvC to scan DNA until it finds its consensus sequence, where it cleaves and resolves cruciform DNA. This is Holliday junction branch migration complex subunit RuvB from Mesomycoplasma hyopneumoniae (strain 232) (Mycoplasma hyopneumoniae).